The primary structure comprises 85 residues: MRQNIHPEYHNVIFLDTTTDFKFLSGSTKTSSETMEWEDGNEYPVIRLDISSDSHPFYTGRQKFAAADGRVERFNKKFGFKSSNE.

It belongs to the bacterial ribosomal protein bL31 family. Type B subfamily. As to quaternary structure, part of the 50S ribosomal subunit.

This chain is Large ribosomal subunit protein bL31B, found in Staphylococcus saprophyticus subsp. saprophyticus (strain ATCC 15305 / DSM 20229 / NCIMB 8711 / NCTC 7292 / S-41).